A 2230-amino-acid polypeptide reads, in one-letter code: Golgin subfamily A member 4 (2230 aa).

Residues 1-64 (MFKKLKQKIS…SGDTQSFAQK (64 aa)) are disordered. Ser10 is subject to Phosphoserine. Residues 12–41 (EQQQLQQALAPAQASSNSSTPTRMRSRTSS) are compositionally biased toward low complexity. Thr39 carries the phosphothreonine modification. Phosphoserine occurs at positions 41, 71, 78, and 89. Residues 87–107 (SSSKESLVRTSSRESLNRLDL) are compositionally biased toward basic and acidic residues. The disordered stretch occupies residues 87-127 (SSSKESLVRTSSRESLNRLDLDSSTASFDPPSDMDSEAEDL). The interval 133-203 (SLNKEQLIQR…EELQMDQQAK (71 aa)) is interaction with MACF1. The stretch at 133 to 2185 (SLNKEQLIQR…EYLRKVLFEY (2053 aa)) forms a coiled coil. Ser266 is subject to Phosphoserine. N-linked (GlcNAc...) asparagine glycans are attached at residues Asn585 and Asn1612. The GRIP domain maps to 2168-2215 (LFGEPTEFEYLRKVLFEYMMGRETKTMAKVITTVLKFPDDQTQKILER). Thr2223 carries the phosphothreonine modification.

Homodimer. Interacts with RAB6A. Interacts with GTP-bound ARL1 and ARL3. Interacts with MACF1. Directly interacts with TBC1D23. Interacts with FAM91A1; this interaction may be mediated by TBC1D23.

The protein resides in the cytoplasm. The protein localises to the golgi apparatus membrane. It is found in the golgi apparatus. Its subcellular location is the trans-Golgi network membrane. In terms of biological role, involved in vesicular trafficking at the Golgi apparatus level. May play a role in delivery of transport vesicles containing GPI-linked proteins from the trans-Golgi network through its interaction with MACF1. Involved in endosome-to-Golgi trafficking. This Homo sapiens (Human) protein is Golgin subfamily A member 4 (GOLGA4).